The sequence spans 330 residues: Cyclic AMP receptor-like protein E (330 aa).

Over 1–10 (MLSLSSYVLN) the chain is Extracellular. Residues 11–31 (LVGSILCLIGCLFIIGHFFWI) traverse the membrane as a helical segment. Residues 32–40 (PLLRTSLSR) lie on the Cytoplasmic side of the membrane. A helical membrane pass occupies residues 41-61 (IIIYPTFILLLYDMVSFPSFI). Topologically, residues 62–85 (SKTADLYIERSTIICNFQEAIIQY) are extracellular. Residues 86–106 (LILSNFIWSVCISVNLLYLCF) traverse the membrane as a helical segment. Residues 107–116 (SPNKNLKKNE) lie on the Cytoplasmic side of the membrane. A helical transmembrane segment spans residues 117–137 (LLYHLCSWGIPLIVVVITKIP). Over 138-156 (NMISDNGNQCRFKSPNYIK) the chain is Extracellular. The chain crosses the membrane as a helical span at residues 157 to 177 (FYLETILFIAFMLFNFIVAFI). Topologically, residues 178 to 213 (TIKHIISGNLRESETTTTSVLFVNEKKITTKKIVWR) are cytoplasmic. A helical transmembrane segment spans residues 214-234 (LLLYPSILSICYIMTLVLSIY). Over 235-274 (QFSTESYGSGGAYANSINNKRNDKNTESGNSNNNNNSYIE) the chain is Extracellular. Residue asparagine 269 is glycosylated (N-linked (GlcNAc...) asparagine). Residues 275–295 (ILLYISKAIFLLQGFFNALVY) form a helical membrane-spanning segment. Residues 296–330 (LRSSKLRDRYKKITIFRKIFWRDEADYQSINDGFN) lie on the Cytoplasmic side of the membrane.

It belongs to the G-protein coupled receptor 5 family.

It is found in the membrane. Functionally, receptor for cAMP. The chain is Cyclic AMP receptor-like protein E (crlE) from Dictyostelium discoideum (Social amoeba).